Reading from the N-terminus, the 136-residue chain is Preprocaerulein type I' (136 aa).

The N-terminal stretch at 1–26 is a signal peptide; that stretch reads MFKGILLCVLFAVLSANPLSQPEGFA. The propeptide occupies 27–136; sequence DEERDVRGLA…NALGGAPQQR (110 aa). The disordered stretch occupies residues 82-101; that stretch reads GAPQQREANDERRFADDEDD.

It belongs to the gastrin/cholecystokinin family. Expressed by the skin glands.

It localises to the secreted. The pharmacological activities of caerulein are quite similar to the physiological activities of gastrin and related peptides. The chain is Preprocaerulein type I' from Xenopus laevis (African clawed frog).